The following is a 116-amino-acid chain: MAGVLKKTTGLVGLAVCSTPHERLSILYTKILDVLAEIPKNAAYRKYTEQITNEKLAMVKAEPDVKKLEDQLQGGQLEEVILQAEHELSLARKMRDWKPWEPLVEEPPADQWKWPI.

The residue at position 2 (alanine 2) is an N-acetylalanine. N6-acetyllysine occurs at positions 30, 46, and 60. Phosphoserine is present on serine 89. An N6-acetyllysine; alternate modification is found at lysine 98. Residue lysine 98 is modified to N6-succinyllysine; alternate.

Belongs to the complex I NDUFA5 subunit family. In terms of assembly, complex I is composed of 45 different subunits.

The protein resides in the mitochondrion inner membrane. Functionally, accessory subunit of the mitochondrial membrane respiratory chain NADH dehydrogenase (Complex I), that is believed not to be involved in catalysis. Complex I functions in the transfer of electrons from NADH to the respiratory chain. The immediate electron acceptor for the enzyme is believed to be ubiquinone. The sequence is that of NADH dehydrogenase [ubiquinone] 1 alpha subcomplex subunit 5 (NDUFA5) from Macaca fascicularis (Crab-eating macaque).